Consider the following 262-residue polypeptide: Trypsin theta (262 aa).

A signal peptide spans 1 to 19 (MHGLVVLLVCLAVGSAFAG). A propeptide spans 20-34 (TIGVSNADPFEREGR) (activation peptide). The Peptidase S1 domain occupies 35-260 (IVGGEDTTIR…LRKWILNASQ (226 aa)). A disulfide bond links cysteine 61 and cysteine 77. Active-site charge relay system residues include histidine 76 and aspartate 121. 2 disulfides stabilise this stretch: cysteine 186–cysteine 203 and cysteine 212–cysteine 236. Serine 216 acts as the Charge relay system in catalysis.

Belongs to the peptidase S1 family.

It is found in the secreted. The protein resides in the extracellular space. The enzyme catalyses Preferential cleavage: Arg-|-Xaa, Lys-|-Xaa.. This Drosophila erecta (Fruit fly) protein is Trypsin theta (thetaTry).